Reading from the N-terminus, the 199-residue chain is Photosystem I reaction center subunit XI (199 aa).

The next 2 membrane-spanning stretches (helical) occupy residues 108 to 128 and 165 to 185; these read LTAGLLATIGAVHILTALFVL and FWLGGCGGAVFAWLLVGTLHL.

The protein belongs to the PsaL family.

The protein localises to the cellular thylakoid membrane. In Prochlorococcus marinus (strain MIT 9301), this protein is Photosystem I reaction center subunit XI.